Here is a 122-residue protein sequence, read N- to C-terminus: Large ribosomal subunit protein uL14 (122 aa).

It belongs to the universal ribosomal protein uL14 family. As to quaternary structure, part of the 50S ribosomal subunit. Forms a cluster with proteins L3 and L19. In the 70S ribosome, L14 and L19 interact and together make contacts with the 16S rRNA in bridges B5 and B8.

Its function is as follows. Binds to 23S rRNA. Forms part of two intersubunit bridges in the 70S ribosome. This chain is Large ribosomal subunit protein uL14, found in Syntrophotalea carbinolica (strain DSM 2380 / NBRC 103641 / GraBd1) (Pelobacter carbinolicus).